Here is a 747-residue protein sequence, read N- to C-terminus: Threonine synthase-like 1 (747 aa).

N6-(pyridoxal phosphate)lysine is present on K351.

The protein belongs to the threonine synthase family. Pyridoxal 5'-phosphate is required as a cofactor.

The sequence is that of Threonine synthase-like 1 (Thnsl1) from Mus musculus (Mouse).